The following is a 293-amino-acid chain: Ribosomal protein L11 methyltransferase (293 aa).

4 residues coordinate S-adenosyl-L-methionine: T145, G166, D188, and N230.

It belongs to the methyltransferase superfamily. PrmA family.

The protein localises to the cytoplasm. The catalysed reaction is L-lysyl-[protein] + 3 S-adenosyl-L-methionine = N(6),N(6),N(6)-trimethyl-L-lysyl-[protein] + 3 S-adenosyl-L-homocysteine + 3 H(+). Methylates ribosomal protein L11. This chain is Ribosomal protein L11 methyltransferase, found in Shewanella baltica (strain OS195).